Reading from the N-terminus, the 158-residue chain is Protein Smg homolog (158 aa).

The protein belongs to the Smg family.

This chain is Protein Smg homolog, found in Shewanella sp. (strain ANA-3).